Here is a 322-residue protein sequence, read N- to C-terminus: Homeobox protein DBX1-B (322 aa).

A DNA-binding region (homeobox) is located at residues 179–238; that stretch reads GMLRRAVFSDVQRKALEKMFQKQKYISKPDRKKLATKLGLKDSQVKIWFQNRRMKWRNSK. Disordered stretches follow at residues 238-266 and 296-322; these read KERELLSSGGCREQTLPTKMNPNPDLSDV and DLHFKSPSISSKHSDFSESEDEEITVS. The segment covering 312–322 has biased composition (acidic residues); the sequence is SESEDEEITVS.

The protein belongs to the H2.0 homeobox family.

The protein resides in the nucleus. This is Homeobox protein DBX1-B (dbx1b) from Danio rerio (Zebrafish).